We begin with the raw amino-acid sequence, 382 residues long: F-box/kelch-repeat protein KIB1 (382 aa).

The F-box domain occupies 22-69 (SKHSILAVDLVRLILERLSFVDFHRARCVSSIWYIASKTVIGVTNPTT). Kelch repeat units follow at residues 73–117 (ILFP…ASSG), 159–209 (VLWV…FKEN), and 259–306 (IVAK…ITVE).

Part of a SCF (SKP1-cullin-F-box) protein ligase complex. Binds directly to several GSK3 family proteins such as SKP1A/ASK1, ASK1/SK11, ASK3/SK12, ASK5/SK13, ASK7/BIN2/SK21, ASK9/SK22 and ASK6/SK23. Interacts with ASK7/BIN2/SK21 in a brassinosteroid (BR)-dependent manner. Expressed in seedlings, leaves, stems, flower buds and flowers.

It localises to the cytoplasm. The protein resides in the nucleus. The protein localises to the nucleolus. Functionally, component of SCF(ASK-cullin-F-box) E3 ubiquitin ligase complexes, which may mediate the ubiquitination and subsequent proteasomal degradation of target proteins. Required for brassinosteroid (BR) signal transduction. Mediates ASK7/BIN2/SK21 inactivation both by competing with substrate binding (e.g. BZR1) and by promoting its ubiquitination and subsequent proteasomal degradation. This Arabidopsis thaliana (Mouse-ear cress) protein is F-box/kelch-repeat protein KIB1.